Reading from the N-terminus, the 569-residue chain is Membrane protein insertase YidC (569 aa).

The next 8 membrane-spanning stretches (helical) occupy residues 7–24, 219–239, 299–319, 340–360, 366–386, 436–456, 485–505, and 526–546; these read VLWV…DNYN, GSAL…PAIY, LYAV…TASM, FELV…FWLM, ILGN…LAFF, IGGC…YWVL, IGTF…SMFI, and PIAF…YWVV.

This sequence belongs to the OXA1/ALB3/YidC family. Type 1 subfamily. In terms of assembly, interacts with the Sec translocase complex via SecD. Specifically interacts with transmembrane segments of nascent integral membrane proteins during membrane integration.

The protein localises to the cell inner membrane. Required for the insertion and/or proper folding and/or complex formation of integral membrane proteins into the membrane. Involved in integration of membrane proteins that insert both dependently and independently of the Sec translocase complex, as well as at least some lipoproteins. Aids folding of multispanning membrane proteins. The sequence is that of Membrane protein insertase YidC from Herminiimonas arsenicoxydans.